A 70-amino-acid polypeptide reads, in one-letter code: uncharacterized protein (70 aa).

The chain crosses the membrane as a helical span at residues 12-32 (VLFMNFFSVFVCTIGTLFLVF).

Its subcellular location is the membrane. This is an uncharacterized protein from Saccharomyces cerevisiae (strain ATCC 204508 / S288c) (Baker's yeast).